We begin with the raw amino-acid sequence, 110 residues long: uncharacterized protein (110 aa).

The protein belongs to the RuBisCO large chain family.

It localises to the mitochondrion. This is an uncharacterized protein from Arabidopsis thaliana (Mouse-ear cress).